The following is a 367-amino-acid chain: MYYSIIISLIEVVLVLVPALLGIAYVTIAERKTMASMQRRLGPNFVGYYGLLQAFADALKLLLKEYVAPTQANIILFFLGPVITLIFSLLGYAVIPYGPSLAINDFSLGIYYILAVSSLATYGILLAGWSANSKYAFLGSLRSTAQLISYELVLSSAILLVIMLTGSLNLSVNIESQRAIWNIFPLLPVFIIFFIGSVAETNRAPFDLAEAESELVSGFMTEHAAVVFVFFFLAEYGSIVLMCILTSILFLGGYLSINSLDVFNFFYSILFNIGFIDLNFFNIFYYFYKEIFVNNSIIEGLIYGLTIGLKSSILIFLFIWVRASFPRIRFDQLMAFCWTVLLPLLFALIVLLPCILYSYNILPVNVL.

A run of 10 helical transmembrane segments spans residues 5-25, 43-63, 74-94, 108-128, 152-172, 179-199, 225-245, 265-285, 301-321, and 336-356; these read IIISLIEVVLVLVPALLGIAY, PNFVGYYGLLQAFADALKLLL, IILFFLGPVITLIFSLLGYAV, LGIYYILAVSSLATYGILLAG, LVLSSAILLVIMLTGSLNLSV, AIWNIFPLLPVFIIFFIGSVA, AVVFVFFFLAEYGSIVLMCIL, FFYSILFNIGFIDLNFFNIFY, LIYGLTIGLKSSILIFLFIWV, and FCWTVLLPLLFALIVLLPCIL.

Belongs to the complex I subunit 1 family.

It localises to the mitochondrion inner membrane. It catalyses the reaction a ubiquinone + NADH + 5 H(+)(in) = a ubiquinol + NAD(+) + 4 H(+)(out). In terms of biological role, core subunit of the mitochondrial membrane respiratory chain NADH dehydrogenase (Complex I) that is believed to belong to the minimal assembly required for catalysis. Complex I functions in the transfer of electrons from NADH to the respiratory chain. The immediate electron acceptor for the enzyme is believed to be ubiquinone. This chain is NADH-ubiquinone oxidoreductase chain 1 (ND1), found in Podospora anserina (strain S / ATCC MYA-4624 / DSM 980 / FGSC 10383) (Pleurage anserina).